Reading from the N-terminus, the 247-residue chain is ATP synthase subunit a, chloroplastic (247 aa).

Transmembrane regions (helical) follow at residues 38-58, 95-115, 134-154, 199-219, and 220-240; these read QVLI…AIAV, VPFI…GALL, INTT…AGLT, LVVV…VMFL, and GLFT…AYIG.

This sequence belongs to the ATPase A chain family. As to quaternary structure, F-type ATPases have 2 components, CF(1) - the catalytic core - and CF(0) - the membrane proton channel. CF(1) has five subunits: alpha(3), beta(3), gamma(1), delta(1), epsilon(1). CF(0) has four main subunits: a, b, b' and c.

The protein localises to the plastid. It is found in the chloroplast thylakoid membrane. Functionally, key component of the proton channel; it plays a direct role in the translocation of protons across the membrane. This Ceratophyllum demersum (Rigid hornwort) protein is ATP synthase subunit a, chloroplastic.